A 690-amino-acid chain; its full sequence is Elongation factor G (690 aa).

Residues Glu8–Val283 enclose the tr-type G domain. GTP-binding positions include Ala17–Thr24, Asp81–His85, and Asn135–Asp138.

The protein belongs to the TRAFAC class translation factor GTPase superfamily. Classic translation factor GTPase family. EF-G/EF-2 subfamily.

It localises to the cytoplasm. In terms of biological role, catalyzes the GTP-dependent ribosomal translocation step during translation elongation. During this step, the ribosome changes from the pre-translocational (PRE) to the post-translocational (POST) state as the newly formed A-site-bound peptidyl-tRNA and P-site-bound deacylated tRNA move to the P and E sites, respectively. Catalyzes the coordinated movement of the two tRNA molecules, the mRNA and conformational changes in the ribosome. The polypeptide is Elongation factor G (Rhodopseudomonas palustris (strain HaA2)).